A 152-amino-acid chain; its full sequence is Transcription factor XE1.1 (152 aa).

Disordered regions lie at residues 1–54 (RDDF…ANNA) and 123–152 (KVSAVSAEPPNTHPGVHPGLTDTTNPMGHM). Composition is skewed to basic and acidic residues over residues 7 to 22 (DDMKSDDESSQKEMKS) and 38 to 54 (PEQKVEREKERRMANNA). Residues 47-100 (ERRMANNARERLRVRDINEAFKELGRMCQLHLKSEKPQTKLLILHQAVAVILNL) form the bHLH domain. Residues 102–125 (QQVRERNLNPKAACLKRREEEKVS) form a class A specific domain region. A compositionally biased stretch (polar residues) spans 143-152 (TDTTNPMGHM).

Efficient DNA binding requires dimerization with another bHLH protein. Forms homo- or heterooligomers with myogenin, E12 and ITF2 proteins.

The protein localises to the nucleus. Transcriptional regulator. Involved in the initiation of neuronal differentiation. Activates transcription by binding to the E box-containing promoter. This is Transcription factor XE1.1 from Xenopus laevis (African clawed frog).